Consider the following 123-residue polypeptide: Large ribosomal subunit protein uL29 (123 aa).

This sequence belongs to the universal ribosomal protein uL29 family.

The polypeptide is Large ribosomal subunit protein uL29 (RPL35) (Babesia bovis).